The chain runs to 826 residues: MEEKYVFAEIEEKLRRRWETEGIYHVPDFSNRPKYYCLEMFPYPSGNLHMGHVRNYAIGDVVARFKTMRGYDVLHPMGWDAFGLPAENAAIQHGVPPARWTWDNINVMRTQLKLLGVSYDWRRELATCHPGYYRWTQWLFLQFYHRGLAYKAKAPVNWCPSCATVLANEQVVAGGCERCKTAVERRELEQWFFRITAYADRLLKDLAKLPGWPEKVKVMQENWIGRSTGAEIAFPLAGTDEAIRVFTTRPDTLGGVTYMTIAPEHPLVSRVTTPEHRAAVEAFTERARSLSELDRTAGEHEKEGLFTGAYCVNPLTGEQVPVFVANYVLMEYGTGCVMGVPAHDQRDFEFARKYGLPVRVVIQPEGDLLDGDTMSQAYTGPGRLVNTPGFDRMANAEAIPAITRYLEARGAARFQVQYRLRDWLISRQRYWGAPIPIVYCEGCGVVPVPEEGLPVLLPEDVAFKPTGRSPLTESPDFVNTTCPTCGGPARRETDTMDTFMCSSWYYFRFTSPREENGPWGLERVDRWLPVDQYIGGVEHAILHLMYSRFFTKVLYDMGLVKVQEPFTNLLTQGMVLKDGAKMSKSKGNVVSPEDILNRYGADTTRLFVLFAAPPERDLEWSDQGVEGCYRFLQRVWRLVNSVADEIRGAAPVPSANLVGVNRSMRRLTHQTIKKVTEDIETRFNFNTAISAAMELVNGMYHFRDRVAPVNRDPAVMREAVERLLLLLAPFAPFLADELWARTGHPESIHREPWPEYDPELLVEDQVEIVVQINGRVRDRLMVAADIAPEAMRDTVLEQPRVQALVAGKEIVKVVPVPGKLVNIVVR.

A 'HIGH' region motif is present at residues 42–52 (PYPSGNLHMGH). The 'KMSKS' region signature appears at 581–585 (KMSKS). Lys-584 lines the ATP pocket.

It belongs to the class-I aminoacyl-tRNA synthetase family.

It is found in the cytoplasm. The catalysed reaction is tRNA(Leu) + L-leucine + ATP = L-leucyl-tRNA(Leu) + AMP + diphosphate. The sequence is that of Leucine--tRNA ligase from Desulforudis audaxviator (strain MP104C).